A 112-amino-acid chain; its full sequence is Seminal vesicle secretory protein 4 (112 aa).

Residues 1–21 (MKSTSLFLCSLLLLLVTGAIG) form the signal peptide. The disordered stretch occupies residues 26 to 112 (EKYSQSEEVV…RSRFAQDVLN (87 aa)). Low complexity-rich tracts occupy residues 36-47 (SESFASGPSSGS) and 85-97 (RSSG…GESS).

This sequence belongs to the SVP2/SVP5/SVP6 family. Testis.

Its subcellular location is the secreted. It localises to the extracellular space. This Rattus norvegicus (Rat) protein is Seminal vesicle secretory protein 4 (Svs4).